The chain runs to 202 residues: Small ribosomal subunit protein uS4 (202 aa).

Residues 23–42 (RKNARRAYAPGQHGQARKKR) are disordered. An S4 RNA-binding domain is found at 90-153 (MRLDNTVFRL…RSQDLVKRNM (64 aa)).

This sequence belongs to the universal ribosomal protein uS4 family. In terms of assembly, part of the 30S ribosomal subunit. Contacts protein S5. The interaction surface between S4 and S5 is involved in control of translational fidelity.

Its function is as follows. One of the primary rRNA binding proteins, it binds directly to 16S rRNA where it nucleates assembly of the body of the 30S subunit. In terms of biological role, with S5 and S12 plays an important role in translational accuracy. This is Small ribosomal subunit protein uS4 from Microcystis aeruginosa (strain NIES-843 / IAM M-2473).